Reading from the N-terminus, the 423-residue chain is 3-phosphoshikimate 1-carboxyvinyltransferase (423 aa).

K21, S22, and R26 together coordinate 3-phosphoshikimate. K21 provides a ligand contact to phosphoenolpyruvate. Phosphoenolpyruvate is bound by residues G92 and R120. Positions 166, 168, 194, 310, and 337 each coordinate 3-phosphoshikimate. Q168 contacts phosphoenolpyruvate. The active-site Proton acceptor is D310. Residues R341, R384, and K409 each coordinate phosphoenolpyruvate.

Belongs to the EPSP synthase family. Monomer.

The protein resides in the cytoplasm. It catalyses the reaction 3-phosphoshikimate + phosphoenolpyruvate = 5-O-(1-carboxyvinyl)-3-phosphoshikimate + phosphate. It participates in metabolic intermediate biosynthesis; chorismate biosynthesis; chorismate from D-erythrose 4-phosphate and phosphoenolpyruvate: step 6/7. Catalyzes the transfer of the enolpyruvyl moiety of phosphoenolpyruvate (PEP) to the 5-hydroxyl of shikimate-3-phosphate (S3P) to produce enolpyruvyl shikimate-3-phosphate and inorganic phosphate. The sequence is that of 3-phosphoshikimate 1-carboxyvinyltransferase from Syntrophobacter fumaroxidans (strain DSM 10017 / MPOB).